Reading from the N-terminus, the 290-residue chain is HTH-type transcriptional regulator BudR (290 aa).

Residues methionine 1 to threonine 58 enclose the HTH lysR-type domain. The H-T-H motif DNA-binding region spans phenylalanine 18–glutamine 37.

The protein belongs to the LysR transcriptional regulatory family.

Functionally, regulator of the budABC operon for 2,3-butanediol synthesis. This chain is HTH-type transcriptional regulator BudR (budR), found in Raoultella terrigena (Klebsiella terrigena).